The following is a 433-amino-acid chain: Serine hydroxymethyltransferase (433 aa).

121 to 123 (AHV) lines the (6S)-5,6,7,8-tetrahydrofolate pocket. Position 227 is an N6-(pyridoxal phosphate)lysine (K227). Residue E243 participates in (6S)-5,6,7,8-tetrahydrofolate binding.

This sequence belongs to the SHMT family. Homodimer. Pyridoxal 5'-phosphate serves as cofactor.

It localises to the cytoplasm. The protein operates within amino-acid biosynthesis; glycine biosynthesis; glycine from L-serine: step 1/1. Catalyzes the reversible interconversion of serine and glycine with a modified folate serving as the one-carbon carrier. Also exhibits a pteridine-independent aldolase activity toward beta-hydroxyamino acids, producing glycine and aldehydes, via a retro-aldol mechanism. The sequence is that of Serine hydroxymethyltransferase from Saccharolobus islandicus (strain L.S.2.15 / Lassen #1) (Sulfolobus islandicus).